The following is a 258-amino-acid chain: Transcription cofactor vestigial-like protein 1 (258 aa).

2 stretches are compositionally biased toward polar residues: residues 55-65 (PQELTPSSQSE) and 74-87 (SMSPNQWRYSSPWT). The segment at 55–93 (PQELTPSSQSEGVMLKNDDSMSPNQWRYSSPWTKPQPEV) is disordered.

It belongs to the vestigial family. In terms of assembly, interacts with TEFs.

It is found in the nucleus. Functionally, may act as a specific coactivator for the mammalian TEFs. The chain is Transcription cofactor vestigial-like protein 1 (VGLL1) from Homo sapiens (Human).